The primary structure comprises 213 residues: MKGLFISGSGTNVGKTFVAQYLIRLLSNTLKVSARKPVESDCENKNGRLIPKDALLLSKACNINEPIDKVCRYKLESCSSAQMASQDSGLKLTLDDLVDACMSDEFVIVEGTGGLLSPIARQALNSDLIQALDMPVVLVIKDELGAVNQALLSINSAQSCGLSISMLVLNQIQPNFLKNAQAIKQHTDIDINVFNQNHLASFERKVKKILLVI.

12–17 (NVGKTF) contributes to the ATP binding site. T16 is a binding site for Mg(2+). K36 is an active-site residue. S40 provides a ligand contact to substrate. ATP-binding positions include D53, 110-113 (EGTG), and 170-171 (NQ). Mg(2+) is bound by residues D53 and E110.

This sequence belongs to the dethiobiotin synthetase family. Homodimer. Mg(2+) is required as a cofactor.

It localises to the cytoplasm. The catalysed reaction is (7R,8S)-7,8-diammoniononanoate + CO2 + ATP = (4R,5S)-dethiobiotin + ADP + phosphate + 3 H(+). It functions in the pathway cofactor biosynthesis; biotin biosynthesis; biotin from 7,8-diaminononanoate: step 1/2. In terms of biological role, catalyzes a mechanistically unusual reaction, the ATP-dependent insertion of CO2 between the N7 and N8 nitrogen atoms of 7,8-diaminopelargonic acid (DAPA, also called 7,8-diammoniononanoate) to form a ureido ring. In Ruthia magnifica subsp. Calyptogena magnifica, this protein is ATP-dependent dethiobiotin synthetase BioD.